Reading from the N-terminus, the 630-residue chain is Plastin-3 (630 aa).

EF-hand domains are found at residues 12–47 and 52–87; these read DELD…ANMP and KVRE…VKSS. Ca(2+) contacts are provided by Asp-25, Asn-27, Asn-29, Glu-36, Asp-65, Asn-67, Asp-69, Lys-71, and Glu-76. 2 actin-binding regions span residues 109–382 and 383–627; these read TSEL…ALTK and PENQ…GRGM. 2 consecutive Calponin-homology (CH) domains span residues 123 to 239 and 267 to 378; these read EEEK…KIGL and LSPE…NKYP. Phosphoserine occurs at positions 268, 293, 326, and 339. A Phosphothreonine modification is found at Thr-391. Calponin-homology (CH) domains lie at 397 to 506 and 518 to 627; these read TREE…RRYT and KAND…GRGM.

Monomer. In terms of tissue distribution, expressed in a variety of organs, including muscle, brain, uterus and esophagus.

It localises to the cytoplasm. Actin-bundling protein. This is Plastin-3 (PLS3) from Homo sapiens (Human).